The sequence spans 746 residues: Polyribonucleotide nucleotidyltransferase (746 aa).

Aspartate 519 and aspartate 525 together coordinate Mg(2+). The region spanning 585-644 (PRVIAVKIPVDKIGEVIGPKGKMINQIQEDTGADISIEDDGTVYIGATNGPSADAARSAI) is the KH domain. In terms of domain architecture, S1 motif spans 656–728 (GERYLGTVVK…DRGKLSLSPV (73 aa)).

The protein belongs to the polyribonucleotide nucleotidyltransferase family. Mg(2+) is required as a cofactor.

The protein resides in the cytoplasm. The enzyme catalyses RNA(n+1) + phosphate = RNA(n) + a ribonucleoside 5'-diphosphate. Its function is as follows. Involved in mRNA degradation. Catalyzes the phosphorolysis of single-stranded polyribonucleotides processively in the 3'- to 5'-direction. This chain is Polyribonucleotide nucleotidyltransferase, found in Arthrobacter sp. (strain FB24).